The following is a 304-amino-acid chain: tRNA dimethylallyltransferase (304 aa).

2–9 (GPTASGKT) is an ATP binding site. Substrate is bound at residue 4 to 9 (TASGKT). Residues 28 to 31 (DSAL) are interaction with substrate tRNA.

Belongs to the IPP transferase family. In terms of assembly, monomer. The cofactor is Mg(2+).

The catalysed reaction is adenosine(37) in tRNA + dimethylallyl diphosphate = N(6)-dimethylallyladenosine(37) in tRNA + diphosphate. Functionally, catalyzes the transfer of a dimethylallyl group onto the adenine at position 37 in tRNAs that read codons beginning with uridine, leading to the formation of N6-(dimethylallyl)adenosine (i(6)A). The sequence is that of tRNA dimethylallyltransferase from Blochmanniella pennsylvanica (strain BPEN).